A 120-amino-acid polypeptide reads, in one-letter code: Large ribosomal subunit protein bL17 (120 aa).

This sequence belongs to the bacterial ribosomal protein bL17 family. In terms of assembly, part of the 50S ribosomal subunit. Contacts protein L32.

This is Large ribosomal subunit protein bL17 from Desulforapulum autotrophicum (strain ATCC 43914 / DSM 3382 / VKM B-1955 / HRM2) (Desulfobacterium autotrophicum).